We begin with the raw amino-acid sequence, 220 residues long: Glutamine amidotransferase-like class 1 domain-containing protein 1 (220 aa).

The N-terminal stretch at 1–35 (MASERLPSRPACLLVASGAAEGVSAQSFLHCFTLA) is a signal peptide. N-linked (GlcNAc...) asparagine glycosylation is found at N57 and N201.

Belongs to the peptidase C56 family. In terms of assembly, homotetramer. Component of the FERRY complex composed of five subunits, TBCK, PPP1R21, FERRY3, CRYZL1 and GATD1 with a ratio of 1:2:1:2:4, respectively.

It localises to the secreted. The protein localises to the early endosome. Its function is as follows. Component of the FERRY complex (Five-subunit Endosomal Rab5 and RNA/ribosome intermediary). The FERRY complex directly interacts with mRNAs and RAB5A, and functions as a RAB5A effector involved in the localization and the distribution of specific mRNAs most likely by mediating their endosomal transport. The complex recruits mRNAs and ribosomes to early endosomes through direct mRNA-interaction. This is Glutamine amidotransferase-like class 1 domain-containing protein 1 from Bos taurus (Bovine).